The chain runs to 2873 residues: WD repeat-containing protein 87 (2873 aa).

WD repeat units follow at residues 108-146 (PCRF…TGLQ), 199-239 (TSSG…PLHS), 242-283 (AHQS…RRLE), 368-407 (SILD…CPAK), 415-460 (NSQD…RLEK), 516-553 (LSSC…SSGS), and 565-604 (LHLC…IGIL). Disordered regions lie at residues 1049-1124 (FSLD…ESGT), 1177-1199 (DKRD…GKEA), 1392-1413 (EKKT…ERKV), 1531-1607 (SKSK…QEER), and 2199-2338 (KRKE…EEVD). Composition is skewed to basic residues over residues 1089–1101 (VKKH…RGLK) and 1187–1197 (KLKKKHKKKGK). Residues 1549–1574 (EVSREGEEKEQQVTEEQRHIQEEHKW) show a composition bias toward basic and acidic residues. Residues 1575 to 1586 (ARIHRKRARAEK) show a composition bias toward basic residues. Basic and acidic residues-rich tracts occupy residues 1587 to 1607 (KRAQ…QEER) and 2204 to 2213 (KRGDKPKEKF). A compositionally biased stretch (acidic residues) spans 2244-2276 (SSEEEEEREEEEEREEEEEREEEEERKEEEEGE). The span at 2277–2287 (EKQVEKEEEEK) shows a compositional bias: basic and acidic residues. Over residues 2304 to 2337 (EVFEEKEEIMSEEETESLSDEEEEEESCSLEEEV) the composition is skewed to acidic residues.

The sequence is that of WD repeat-containing protein 87 (WDR87) from Homo sapiens (Human).